A 229-amino-acid polypeptide reads, in one-letter code: Potassium/proton antiporter CemA (229 aa).

A run of 3 helical transmembrane segments spans residues 6–26, 114–134, and 189–209; these read AFIP…ISLS, ILCF…LLII, and IISG…KYWI.

Belongs to the CemA family.

It localises to the plastid. It is found in the chloroplast inner membrane. The enzyme catalyses K(+)(in) + H(+)(out) = K(+)(out) + H(+)(in). Functionally, contributes to K(+)/H(+) antiport activity by supporting proton efflux to control proton extrusion and homeostasis in chloroplasts in a light-dependent manner to modulate photosynthesis. Prevents excessive induction of non-photochemical quenching (NPQ) under continuous-light conditions. Indirectly promotes efficient inorganic carbon uptake into chloroplasts. This chain is Potassium/proton antiporter CemA, found in Carica papaya (Papaya).